Reading from the N-terminus, the 458-residue chain is UDP-N-acetylglucosamine 1-carboxyvinyltransferase (458 aa).

Phosphoenolpyruvate is bound at residue 34-35 (KN). Arg104 lines the UDP-N-acetyl-alpha-D-glucosamine pocket. Cys128 (proton donor) is an active-site residue. At Cys128 the chain carries 2-(S-cysteinyl)pyruvic acid O-phosphothioketal. UDP-N-acetyl-alpha-D-glucosamine is bound by residues Asp320 and Val342.

Belongs to the EPSP synthase family. MurA subfamily.

It localises to the cytoplasm. The catalysed reaction is phosphoenolpyruvate + UDP-N-acetyl-alpha-D-glucosamine = UDP-N-acetyl-3-O-(1-carboxyvinyl)-alpha-D-glucosamine + phosphate. The protein operates within cell wall biogenesis; peptidoglycan biosynthesis. Cell wall formation. Adds enolpyruvyl to UDP-N-acetylglucosamine. The sequence is that of UDP-N-acetylglucosamine 1-carboxyvinyltransferase from Prochlorococcus marinus (strain NATL2A).